We begin with the raw amino-acid sequence, 70 residues long: Large ribosomal subunit protein bL31 (70 aa).

Zn(2+) contacts are provided by Cys-16, Cys-18, Cys-36, and Cys-39.

The protein belongs to the bacterial ribosomal protein bL31 family. Type A subfamily. Part of the 50S ribosomal subunit. The cofactor is Zn(2+).

Binds the 23S rRNA. In Tolumonas auensis (strain DSM 9187 / NBRC 110442 / TA 4), this protein is Large ribosomal subunit protein bL31.